The primary structure comprises 367 residues: Quinolinate synthase (367 aa).

2 residues coordinate iminosuccinate: histidine 45 and serine 62. Cysteine 109 is a binding site for [4Fe-4S] cluster. Residues 140-142 (YVN) and serine 161 each bind iminosuccinate. Cysteine 229 contacts [4Fe-4S] cluster. Iminosuccinate-binding positions include 255-257 (HPE) and threonine 272. A [4Fe-4S] cluster-binding site is contributed by cysteine 319.

Belongs to the quinolinate synthase family. Type 3 subfamily. It depends on [4Fe-4S] cluster as a cofactor.

Its subcellular location is the cytoplasm. It carries out the reaction iminosuccinate + dihydroxyacetone phosphate = quinolinate + phosphate + 2 H2O + H(+). Its pathway is cofactor biosynthesis; NAD(+) biosynthesis; quinolinate from iminoaspartate: step 1/1. Its function is as follows. Catalyzes the condensation of iminoaspartate with dihydroxyacetone phosphate to form quinolinate. This is Quinolinate synthase from Anoxybacillus flavithermus (strain DSM 21510 / WK1).